Reading from the N-terminus, the 235-residue chain is Phosphoribosylaminoimidazole-succinocarboxamide synthase (235 aa).

This sequence belongs to the SAICAR synthetase family.

The catalysed reaction is 5-amino-1-(5-phospho-D-ribosyl)imidazole-4-carboxylate + L-aspartate + ATP = (2S)-2-[5-amino-1-(5-phospho-beta-D-ribosyl)imidazole-4-carboxamido]succinate + ADP + phosphate + 2 H(+). Its pathway is purine metabolism; IMP biosynthesis via de novo pathway; 5-amino-1-(5-phospho-D-ribosyl)imidazole-4-carboxamide from 5-amino-1-(5-phospho-D-ribosyl)imidazole-4-carboxylate: step 1/2. The polypeptide is Phosphoribosylaminoimidazole-succinocarboxamide synthase (Clostridium kluyveri (strain NBRC 12016)).